A 341-amino-acid chain; its full sequence is MLRTTSRTFSRALSSSNFKINCGRRHWFSVLTLLEHQGGNLSPASLSAVEAAKRTGGDVFGFVIGKDSSQISQKVAKSVNDLKKVIYVENPSYEHNIPDQIANVLFENVKKNEISHVFSAHSTVGKGVMPRLAAMFDVMQISDIIGVVSADTFVRPTYAGNVNVTVSTKDPIKIVTVRASAFDAAPSSGEGAATVVEGIDPKPAALQEWVSENIIKNARPDLSSAERVVAGGRPLKDKETFERILTPLADKLGAAIGATRVAVDSGYADNSLQIGQTGKIIAPKLYIAVGIDGAIQHLAGIKDSKVIAAINRDENAPIFQTADVGIVGDLFEIVPELTEKL.

Residue 285-313 (LYIAVGIDGAIQHLAGIKDSKVIAAINRD) coordinates FAD.

This sequence belongs to the ETF alpha-subunit/FixB family. As to quaternary structure, heterodimer of an alpha and a beta subunit. The cofactor is FAD.

Its subcellular location is the mitochondrion matrix. Its function is as follows. The electron transfer flavoprotein serves as a specific electron acceptor for several dehydrogenases, including five acyl-CoA dehydrogenases, glutaryl-CoA and sarcosine dehydrogenase. It transfers the electrons to the main mitochondrial respiratory chain via ETF-ubiquinone oxidoreductase (ETF dehydrogenase). This Schizosaccharomyces pombe (strain 972 / ATCC 24843) (Fission yeast) protein is Probable electron transfer flavoprotein subunit alpha, mitochondrial.